The primary structure comprises 192 residues: Protein SHORT HYPOCOTYL IN WHITE LIGHT 1 (192 aa).

Residues 43–50 carry the Nuclear localization signal motif; that stretch reads FRRLNRSL. Residues 70–92 form a disordered region; that stretch reads GGDNYDVVPDDDGFSDDDDEEDE. Positions 77–92 are enriched in acidic residues; sequence VPDDDGFSDDDDEEDE. The next 2 membrane-spanning stretches (helical) occupy residues 122–142 and 159–179; these read ILPA…ILLL and GGTV…ASFF.

As to quaternary structure, interacts with HY5 and COP1 in the nucleus. Expressed in young seedlings (e.g. hypocotyl and cotyledons) and in green tissues (e.g. leaves, stems, sepals, and young siliques).

It is found in the nucleus membrane. Negative regulator of photomorphogenesis modulating both light and abscisic acid (ABA) signaling pathways. Negatively regulates the light-mediated inhibition of hypocotyl elongation, probably in a PHYB-mediated signaling pathway, but promotes flowering time (especially in long days) and lateral root formation. Enhances light-regulated gene expression. Promotes COP1-mediated degradation of HY5 during seedling development (e.g. hypocotyl growth) through enhanced ubiquitination in the darkness. Also involved in root gravitropism. The protein is Protein SHORT HYPOCOTYL IN WHITE LIGHT 1 of Arabidopsis thaliana (Mouse-ear cress).